Consider the following 277-residue polypeptide: Thiazole synthase (277 aa).

Residue lysine 119 is the Schiff-base intermediate with DXP of the active site. Residues glycine 180, 206-207 (AG), and 228-229 (NT) each bind 1-deoxy-D-xylulose 5-phosphate.

The protein belongs to the ThiG family. In terms of assembly, homotetramer. Forms heterodimers with either ThiH or ThiS.

It localises to the plastid. It is found in the chloroplast. The catalysed reaction is [ThiS sulfur-carrier protein]-C-terminal-Gly-aminoethanethioate + 2-iminoacetate + 1-deoxy-D-xylulose 5-phosphate = [ThiS sulfur-carrier protein]-C-terminal Gly-Gly + 2-[(2R,5Z)-2-carboxy-4-methylthiazol-5(2H)-ylidene]ethyl phosphate + 2 H2O + H(+). The protein operates within cofactor biosynthesis; thiamine diphosphate biosynthesis. In terms of biological role, catalyzes the rearrangement of 1-deoxy-D-xylulose 5-phosphate (DXP) to produce the thiazole phosphate moiety of thiamine. Sulfur is provided by the thiocarboxylate moiety of the carrier protein ThiS. In vitro, sulfur can be provided by H(2)S. In Porphyra purpurea (Red seaweed), this protein is Thiazole synthase.